The sequence spans 847 residues: Leucine--tRNA ligase (847 aa).

The 'HIGH' region signature appears at 41–51 (PYPSGRIHMGH). The 'KMSKS' region signature appears at 619–623 (KMSKS). K622 contacts ATP.

It belongs to the class-I aminoacyl-tRNA synthetase family.

Its subcellular location is the cytoplasm. The enzyme catalyses tRNA(Leu) + L-leucine + ATP = L-leucyl-tRNA(Leu) + AMP + diphosphate. This is Leucine--tRNA ligase from Cereibacter sphaeroides (strain ATCC 17029 / ATH 2.4.9) (Rhodobacter sphaeroides).